Consider the following 291-residue polypeptide: Phosphate import ATP-binding protein PstB (291 aa).

The interval Met-1–Asp-21 is disordered. In terms of domain architecture, ABC transporter spans Tyr-45–Ile-286. Gly-77 to Ser-84 provides a ligand contact to ATP.

This sequence belongs to the ABC transporter superfamily. Phosphate importer (TC 3.A.1.7) family. The complex is composed of two ATP-binding proteins (PstB), two transmembrane proteins (PstC and PstA) and a solute-binding protein (PstS).

It localises to the cell membrane. It catalyses the reaction phosphate(out) + ATP + H2O = ADP + 2 phosphate(in) + H(+). Functionally, part of the ABC transporter complex PstSACB involved in phosphate import. Responsible for energy coupling to the transport system. This is Phosphate import ATP-binding protein PstB from Staphylococcus saprophyticus subsp. saprophyticus (strain ATCC 15305 / DSM 20229 / NCIMB 8711 / NCTC 7292 / S-41).